We begin with the raw amino-acid sequence, 89 residues long: Helix-loop-helix protein 15 (89 aa).

Residues 1 to 32 are disordered; it reads MLMEDGGLDTTSEEYRKLSKAERRKRRRATPK. Basic residues predominate over residues 22 to 32; it reads ERRKRRRATPK. The basic motif stretch occupies residues 32 to 45; that stretch reads KYRNLHATRERIRV. The region spanning 32-84 is the bHLH domain; sequence KYRNLHATRERIRVESFNMAFSQLRALLPTLPVEKKLSKIEILRFSIAYISFL. A helix-loop-helix motif region spans residues 46-84; that stretch reads ESFNMAFSQLRALLPTLPVEKKLSKIEILRFSIAYISFL.

In terms of tissue distribution, expressed in sensory head neurons of the lateral ganglion.

The protein localises to the nucleus. Functionally, transcription factor which binds the E box motif 5'-CA[TC][AG]TG-3'. Involved in modulating physiological aging, probably by regulating expression of branched-chain amino acid transferase-1, bcat-1. This Caenorhabditis elegans protein is Helix-loop-helix protein 15.